A 188-amino-acid chain; its full sequence is F-box only protein 36 (188 aa).

One can recognise an F-box domain in the interval 91 to 137; it reads FDFLERLSDDLLLNIISYLDLEDIARLCQTSHRFAKLCMSDKLWEQI.

In terms of assembly, directly interacts with SKP1 and CUL1.

Functionally, substrate-recognition component of the SCF (SKP1-CUL1-F-box protein)-type E3 ubiquitin ligase complex. This chain is F-box only protein 36 (FBXO36), found in Pongo abelii (Sumatran orangutan).